The chain runs to 586 residues: MKDQLQALIEQAIDALRQDGTLPGDTAVDVQVTRTKDKAHGDFATNVALQLAKPARKKPRDVAEAIVARLPASGLVARTEIAGPGFINLFLGEQAKLSVIATIREQGERYGRSQLGAGKKVQVEFVSANPTGPLHVGHGRGAAYGAAVADLLEAVGFDVHREYYVNDAGRQMDILGTSVWLRYLELTGVELPFPTNAYRGDYVYDIAATLHREHGDHYKREAAEILDGLPPDEPDGGDKEEYIDAMIARAKELLGDNHYRFVFELGLNVILDDIRDDLAEFGVTYDTWYSERSLTDKGAVNLAIERLREAGHLYEKDGALWFRSTDFGDEKDRVVQRDNGQTTYFASDIAYHMDKMERGYDRVIDVWGADHHGYVPRVKAALKALGEDETRLDVLLVQFAILYRGGERVQMSTRSGSFVTLRELREEVGKDAARFFYVMRRCEQHLDFDLDLAKSQSADNPVYYIQYAHARVCSVLRQMEAKGLKHDPSHGEAKLSLLTESHEQEILATLARFPEVIEAAALVEEPHQIANYLRELANDFHTYYNAHQFLVDEPAIRDARLSLILAVRQVIANGLGLLGVSAPQEM.

Positions 128–138 (ANPTGPLHVGH) match the 'HIGH' region motif.

The protein belongs to the class-I aminoacyl-tRNA synthetase family. Monomer.

The protein resides in the cytoplasm. It carries out the reaction tRNA(Arg) + L-arginine + ATP = L-arginyl-tRNA(Arg) + AMP + diphosphate. The sequence is that of Arginine--tRNA ligase from Thioalkalivibrio sulfidiphilus (strain HL-EbGR7).